The following is a 158-amino-acid chain: Interleukin-36 alpha (158 aa).

Positions 1-5 (MEKAL) are excised as a propeptide. Y96 is subject to 3'-nitrotyrosine.

It belongs to the IL-1 family. In terms of assembly, interacts with TMED10; the interaction mediates the translocation from the cytoplasm into the ERGIC (endoplasmic reticulum-Golgi intermediate compartment) and thereby secretion. N-terminal truncation leads to a dramatic enhancement of its activity (&gt;1000-fold). In terms of tissue distribution, expressed in immune system and fetal brain, but not in other tissues tested or in multiple hematopoietic cell lines. Predominantly expressed in skin keratinocytes but not in fibroblasts, endothelial cells or melanocytes. Increased in lesional psoriasis skin.

Its subcellular location is the cytoplasm. It is found in the secreted. Its function is as follows. Cytokine that binds to and signals through the IL1RL2/IL-36R receptor which in turn activates NF-kappa-B and MAPK signaling pathways in target cells linked to a pro-inflammatory response. Part of the IL-36 signaling system that is thought to be present in epithelial barriers and to take part in local inflammatory response; similar to the IL-1 system with which it shares the coreceptor IL1RAP. Seems to be involved in skin inflammatory response by acting on keratinocytes, dendritic cells and indirectly on T-cells to drive tissue infiltration, cell maturation and cell proliferation. In cultured keratinocytes induces the expression of macrophage, T-cell, and neutrophil chemokines, such as CCL3, CCL4, CCL5, CCL2, CCL17, CCL22, CL20, CCL5, CCL2, CCL17, CCL22, CXCL8, CCL20 and CXCL1, and the production of pro-inflammatory cytokines such as TNF-alpha, IL-8 and IL-6. In cultured monocytes up-regulates expression of IL-1A, IL-1B and IL-6. In myeloid dendritic cells involved in cell maturation by up-regulating surface expression of CD83, CD86 and HLA-DR. In monocyte-derived dendritic cells facilitates dendritic cell maturation and drives T-cell proliferation. May play a role in pro-inflammatory effects in the lung. The protein is Interleukin-36 alpha of Homo sapiens (Human).